The primary structure comprises 348 residues: Galactose-1-phosphate uridylyltransferase (348 aa).

Position 28–31 (28–31 (RAKR)) interacts with UDP-alpha-D-glucose. Residues Cys52 and Cys55 each coordinate Zn(2+). UDP-alpha-D-glucose contacts are provided by residues Val61 and 77 to 78 (ND). His115 is a binding site for Zn(2+). Residues Asn153 and 159 to 161 (GCS) contribute to the UDP-alpha-D-glucose site. A Zn(2+)-binding site is contributed by His164. The active-site Tele-UMP-histidine intermediate is the His166. Gln168 contributes to the UDP-alpha-D-glucose binding site. The Fe cation site is built by Glu182, His281, His296, and His298. UDP-alpha-D-glucose-binding positions include 311–312 (KF), 316–317 (YE), and Gln323.

This sequence belongs to the galactose-1-phosphate uridylyltransferase type 1 family. Zn(2+) is required as a cofactor.

The enzyme catalyses alpha-D-galactose 1-phosphate + UDP-alpha-D-glucose = alpha-D-glucose 1-phosphate + UDP-alpha-D-galactose. It participates in carbohydrate metabolism; galactose metabolism. This Salmonella typhimurium (strain LT2 / SGSC1412 / ATCC 700720) protein is Galactose-1-phosphate uridylyltransferase (galT).